A 333-amino-acid chain; its full sequence is Autoinducer 2 import system permease protein LsrC (333 aa).

Transmembrane regions (helical) follow at residues 14-34, 39-59, 70-90, 93-113, 115-135, 157-177, 206-226, 252-272, and 284-304; these read LIAI…YFSL, LVFS…LVML, IAGL…SLSV, LLTL…VTWL, IPAI…MLLL, LNIS…AWIL, IQII…IVFA, GISL…AFFL, and LPAW…LIFD.

This sequence belongs to the binding-protein-dependent transport system permease family. AraH/RbsC subfamily. In terms of assembly, the complex is composed of two ATP-binding proteins (LsrA), two transmembrane proteins (LsrC and LsrD) and a solute-binding protein (LsrB).

It localises to the cell inner membrane. In terms of biological role, part of the ABC transporter complex LsrABCD involved in autoinducer 2 (AI-2) import. Probably responsible for the translocation of the substrate across the membrane. The polypeptide is Autoinducer 2 import system permease protein LsrC (lsrC) (Photorhabdus laumondii subsp. laumondii (strain DSM 15139 / CIP 105565 / TT01) (Photorhabdus luminescens subsp. laumondii)).